The following is a 111-amino-acid chain: Ribonuclease P protein component (111 aa).

It belongs to the RnpA family. As to quaternary structure, consists of a catalytic RNA component (M1 or rnpB) and a protein subunit.

It catalyses the reaction Endonucleolytic cleavage of RNA, removing 5'-extranucleotides from tRNA precursor.. RNaseP catalyzes the removal of the 5'-leader sequence from pre-tRNA to produce the mature 5'-terminus. It can also cleave other RNA substrates such as 4.5S RNA. The protein component plays an auxiliary but essential role in vivo by binding to the 5'-leader sequence and broadening the substrate specificity of the ribozyme. The chain is Ribonuclease P protein component from Mycoplasmopsis pulmonis (strain UAB CTIP) (Mycoplasma pulmonis).